The following is a 166-amino-acid chain: Protein SprT (166 aa).

Residues 21–160 (ANQHFSREFP…CQQCQQTLAF (140 aa)) form the SprT-like domain. His74 contacts Zn(2+). Glu75 is an active-site residue. A Zn(2+)-binding site is contributed by His78.

This sequence belongs to the SprT family. The cofactor is Zn(2+).

The protein resides in the cytoplasm. The sequence is that of Protein SprT from Vibrio atlanticus (strain LGP32) (Vibrio splendidus (strain Mel32)).